Consider the following 49-residue polypeptide: Large ribosomal subunit protein bL32 (49 aa).

It belongs to the bacterial ribosomal protein bL32 family.

In Helicobacter hepaticus (strain ATCC 51449 / 3B1), this protein is Large ribosomal subunit protein bL32.